We begin with the raw amino-acid sequence, 227 residues long: Extracellular deoxyribonuclease (227 aa).

Positions 1–20 (MFRPLLSFTLARLVSLPLHA) are cleaved as a signal peptide.

It belongs to the EndA/NucM nuclease family.

The protein localises to the secreted. The protein is Extracellular deoxyribonuclease of Aeromonas hydrophila.